A 288-amino-acid polypeptide reads, in one-letter code: MAATFFGEVVKAPCRAGTEDEEEEEEGRRETPEDREVRLQLARKREVRLLRRQTKTSLEVSLLEKYPCSKFIIAIGNNAVAFLSSFVMNSGVWEEVGCAKLWNEWCRTTDTTHLSSTEAFCVFYHLKSNPSVFLCQCSCYVAEDQQYQWLEKVFGSCPRKNMQITILTCRHVTDYKTSESTGSLPSPFLRALKTQNFKDSACCPLLEQPNIVHDLPAAVLSYCQVWKIPAILYLCYTDVMKLDLITVEAFKPILSTRSLKGLVKNIPQSTEILKKLMTTNEIQSNIYT.

Alanine 2 is subject to N-acetylalanine. The segment at 13-35 is disordered; that stretch reads PCRAGTEDEEEEEEGRRETPEDR. A Phosphothreonine modification is found at threonine 18. Residues 26 to 35 show a composition bias toward basic and acidic residues; it reads EGRRETPEDR. Phosphothreonine is present on threonine 54. Residue serine 180 is modified to Phosphoserine. The residue at position 264 (lysine 264) is an N6-acetyllysine.

It belongs to the PSMG1 family. As to quaternary structure, forms a heterodimer with PSMG2. The PSMG1-PSMG2 heterodimer interacts directly with the PSMA5 and PSMA7 proteasome alpha subunits. Post-translationally, degraded by the proteasome upon completion of 20S proteasome maturation. As to expression, in the adult, detected in brain, colon, leukocytes, breast and testis. Widely expressed in the fetus. Also expressed in a variety of proliferating cell lines.

It localises to the cytoplasm. It is found in the endoplasmic reticulum. Functionally, chaperone protein which promotes assembly of the 20S proteasome as part of a heterodimer with PSMG2. The PSMG1-PSMG2 heterodimer binds to the PSMA5 and PSMA7 proteasome subunits, promotes assembly of the proteasome alpha subunits into the heteroheptameric alpha ring and prevents alpha ring dimerization. The sequence is that of Proteasome assembly chaperone 1 from Homo sapiens (Human).